A 207-amino-acid chain; its full sequence is Acyl-homoserine-lactone synthase (207 aa).

Belongs to the autoinducer synthase family.

The enzyme catalyses a fatty acyl-[ACP] + S-adenosyl-L-methionine = an N-acyl-L-homoserine lactone + S-methyl-5'-thioadenosine + holo-[ACP] + H(+). In terms of biological role, required for the synthesis of N-butanoyl-L-homoserine lactone (BHL), an autoinducer molecule which binds to AsaR. The protein is Acyl-homoserine-lactone synthase (asaI) of Aeromonas salmonicida.